Consider the following 144-residue polypeptide: Ribonuclease H (144 aa).

The 141-residue stretch at 1-141 (MDKIDIYSDG…ADALANRGVE (141 aa)) folds into the RNase H type-1 domain. Residues D9, E47, D69, and D133 each contribute to the Mg(2+) site.

Belongs to the RNase H family. Monomer. Mg(2+) serves as cofactor.

It localises to the cytoplasm. It carries out the reaction Endonucleolytic cleavage to 5'-phosphomonoester.. Endonuclease that specifically degrades the RNA of RNA-DNA hybrids. The protein is Ribonuclease H of Janthinobacterium sp. (strain Marseille) (Minibacterium massiliensis).